We begin with the raw amino-acid sequence, 389 residues long: Chalcone synthase 8 (389 aa).

Cys164 is an active-site residue.

It belongs to the thiolase-like superfamily. Chalcone/stilbene synthases family.

The enzyme catalyses (E)-4-coumaroyl-CoA + 3 malonyl-CoA + 3 H(+) = 2',4,4',6'-tetrahydroxychalcone + 3 CO2 + 4 CoA. It participates in secondary metabolite biosynthesis; flavonoid biosynthesis. The primary product of this enzyme is 4,2',4',6'-tetrahydroxychalcone (also termed naringenin-chalcone or chalcone) which can under specific conditions spontaneously isomerize into naringenin. The protein is Chalcone synthase 8 (CHS8) of Medicago sativa (Alfalfa).